Consider the following 257-residue polypeptide: Phosphatidylglycerol--prolipoprotein diacylglyceryl transferase (257 aa).

4 helical membrane passes run 12–32 (FSIR…VYLA), 49–69 (FILM…VIFE), 83–103 (IWNG…LLVI), and 109–129 (LINP…AQAI). Arginine 131 is an a 1,2-diacyl-sn-glycero-3-phospho-(1'-sn-glycerol) binding site. The next 3 membrane-spanning stretches (helical) occupy residues 167-187 (VPTF…IMSI), 197-217 (GEVA…IEGM), and 226-246 (GLRV…VMII).

It belongs to the Lgt family.

Its subcellular location is the cell membrane. It carries out the reaction L-cysteinyl-[prolipoprotein] + a 1,2-diacyl-sn-glycero-3-phospho-(1'-sn-glycerol) = an S-1,2-diacyl-sn-glyceryl-L-cysteinyl-[prolipoprotein] + sn-glycerol 1-phosphate + H(+). It functions in the pathway protein modification; lipoprotein biosynthesis (diacylglyceryl transfer). Its function is as follows. Catalyzes the transfer of the diacylglyceryl group from phosphatidylglycerol to the sulfhydryl group of the N-terminal cysteine of a prolipoprotein, the first step in the formation of mature lipoproteins. The sequence is that of Phosphatidylglycerol--prolipoprotein diacylglyceryl transferase from Streptococcus agalactiae serotype Ia (strain ATCC 27591 / A909 / CDC SS700).